A 132-amino-acid chain; its full sequence is C-glycoside deglycosidase beta subunit (132 aa).

The protein belongs to the C-glycoside deglycosidase beta subunit family. In terms of assembly, heterodimer composed of an alpha subunit (CarB2) and a beta subunit (CarC2). It depends on a divalent metal cation as a cofactor.

It carries out the reaction 3''-dehydroorientin = 1,5-anhydro-D-erythro-hex-1-en-3-ulose + luteolin. Its activity is regulated as follows. Activity is strongly reduced in the presence of chelating agents. Its function is as follows. Carbon-carbon bond-cleaving enzyme which participates in the metabolism of C-glycosides. Acts on the C8-glycosylated compound 3''-dehydroorientin (3''-oxo-orientin). This Arthrobacter globiformis (strain ATCC 8010 / DSM 20124 / JCM 1332 / NBRC 12137 / NCIMB 8907 / NRRL B-2979 / 168) protein is C-glycoside deglycosidase beta subunit.